A 167-amino-acid chain; its full sequence is MNEVGVRFERGKLFLPHVMMAADAMTAGVNALKDLMPEGSASSKMGVIVNGTVEGDVHDIGKSIVSTMLQSAGFEVHDIGRDVPIRNFIEKAKEVNADMIGLSALMTTTLPGQRDVIELLKEEGLRDKVKVMIGGAPATQAWADKIGADCYAENASEAVTKAKELLA.

Residues 1-44 (MNEVGVRFERGKLFLPHVMMAADAMTAGVNALKDLMPEGSASSK) enclose the B12-binding N-terminal domain. Residues 45–167 (MGVIVNGTVE…AVTKAKELLA (123 aa)) enclose the B12-binding domain. Residue His58 participates in methylcob(III)alamin binding.

The protein belongs to the methylamine corrinoid protein family.

It participates in one-carbon metabolism; methanogenesis from dimethylamine. Its function is as follows. Acts as a methyl group carrier between MtbB and MtbA. In Methanosarcina mazei (strain ATCC BAA-159 / DSM 3647 / Goe1 / Go1 / JCM 11833 / OCM 88) (Methanosarcina frisia), this protein is Dimethylamine corrinoid protein 3 (mtbC3).